The following is a 100-amino-acid chain: Large ribosomal subunit protein bL21 (100 aa).

The protein belongs to the bacterial ribosomal protein bL21 family. Part of the 50S ribosomal subunit. Contacts protein L20.

This protein binds to 23S rRNA in the presence of protein L20. The sequence is that of Large ribosomal subunit protein bL21 from Mycoplasmopsis synoviae (strain 53) (Mycoplasma synoviae).